The primary structure comprises 374 residues: ATPase ASNA1 homolog (374 aa).

Residue 44–51 coordinates ATP; it reads KGGVGKTT. D73 is a catalytic residue. ATP is bound by residues E244 and N271.

It belongs to the arsA ATPase family. In terms of assembly, homodimer.

It is found in the cytoplasm. It localises to the endoplasmic reticulum. In terms of biological role, ATPase required for the post-translational delivery of tail-anchored (TA) proteins to the endoplasmic reticulum. Recognizes and selectively binds the transmembrane domain of TA proteins in the cytosol. This complex then targets to the endoplasmic reticulum by membrane-bound receptors, where the tail-anchored protein is released for insertion. This process is regulated by ATP binding and hydrolysis. ATP binding drives the homodimer towards the closed dimer state, facilitating recognition of newly synthesized TA membrane proteins. ATP hydrolysis is required for insertion. Subsequently, the homodimer reverts towards the open dimer state, lowering its affinity for the membrane-bound receptor, and returning it to the cytosol to initiate a new round of targeting. The chain is ATPase ASNA1 homolog from Plasmodium vivax (strain Salvador I).